The primary structure comprises 809 residues: Sucrose synthase 4 (809 aa).

The interval 275–753 is GT-B glycosyltransferase; that stretch reads MIFNVVVVSP…GLQRIYEKYT (479 aa).

Belongs to the glycosyltransferase 1 family. Plant sucrose synthase subfamily. Predominantly expressed in the leaf tissues and in caryopses.

The catalysed reaction is an NDP-alpha-D-glucose + D-fructose = a ribonucleoside 5'-diphosphate + sucrose + H(+). In terms of biological role, sucrose-cleaving enzyme that provides UDP-glucose and fructose for various metabolic pathways. This is Sucrose synthase 4 (SUS4) from Oryza sativa subsp. japonica (Rice).